The primary structure comprises 775 residues: BLOC-2 complex member HPS6 (775 aa).

Component of the biogenesis of lysosome-related organelles complex-2 (or BLOC2) composed of HPS3, HPS5 and HPS6. Interacts with HPS5 and HPS3. Interacts with biogenesis of lysosome-related organelles complex-1 (BLOC1). Interacts with AP-3 complex. Interacts with MNAT1. Interacts with DCTN1 and dynein intermediate chain. In terms of tissue distribution, ubiquitous.

The protein localises to the microsome membrane. It is found in the cytoplasm. It localises to the cytosol. Its subcellular location is the early endosome membrane. The protein resides in the lysosome membrane. Its function is as follows. May regulate the synthesis and function of lysosomes and of highly specialized organelles, such as melanosomes and platelet dense granules. Acts as a cargo adapter for the dynein-dynactin motor complex to mediate the transport of lysosomes from the cell periphery to the perinuclear region. Facilitates retrograde lysosomal trafficking by linking the motor complex to lysosomes, and perinuclear positioning of lysosomes is crucial for the delivery of endocytic cargos to lysosomes, for lysosome maturation and functioning. This chain is BLOC-2 complex member HPS6 (HPS6), found in Homo sapiens (Human).